We begin with the raw amino-acid sequence, 489 residues long: UDP-N-acetylmuramoyl-L-alanyl-D-glutamate--2,6-diaminopimelate ligase (489 aa).

Ser30 is a UDP-N-acetyl-alpha-D-muramoyl-L-alanyl-D-glutamate binding site. Position 110-116 (110-116 (GTNGKTT)) interacts with ATP. Residues 152–153 (TT), Ser179, and Arg187 each bind UDP-N-acetyl-alpha-D-muramoyl-L-alanyl-D-glutamate. Lys219 carries the post-translational modification N6-carboxylysine. Meso-2,6-diaminopimelate-binding positions include Arg381, 405–408 (DNPR), Gly458, and Glu462. The short motif at 405 to 408 (DNPR) is the Meso-diaminopimelate recognition motif element.

The protein belongs to the MurCDEF family. MurE subfamily. It depends on Mg(2+) as a cofactor. Carboxylation is probably crucial for Mg(2+) binding and, consequently, for the gamma-phosphate positioning of ATP.

Its subcellular location is the cytoplasm. The catalysed reaction is UDP-N-acetyl-alpha-D-muramoyl-L-alanyl-D-glutamate + meso-2,6-diaminopimelate + ATP = UDP-N-acetyl-alpha-D-muramoyl-L-alanyl-gamma-D-glutamyl-meso-2,6-diaminopimelate + ADP + phosphate + H(+). The protein operates within cell wall biogenesis; peptidoglycan biosynthesis. Its function is as follows. Catalyzes the addition of meso-diaminopimelic acid to the nucleotide precursor UDP-N-acetylmuramoyl-L-alanyl-D-glutamate (UMAG) in the biosynthesis of bacterial cell-wall peptidoglycan. The chain is UDP-N-acetylmuramoyl-L-alanyl-D-glutamate--2,6-diaminopimelate ligase from Syntrophomonas wolfei subsp. wolfei (strain DSM 2245B / Goettingen).